An 841-amino-acid chain; its full sequence is Probable alpha-glucuronidase A (841 aa).

The N-terminal stretch at 1–19 (MLRLPLVLVWSLWASLTVA) is a signal peptide. Residues Asn50, Asn104, Asn223, Asn280, Asn311, Asn344, Asn466, Asn528, Asn577, Asn683, Asn724, and Asn733 are each glycosylated (N-linked (GlcNAc...) asparagine).

It belongs to the glycosyl hydrolase 67 family.

It localises to the secreted. It carries out the reaction an alpha-D-glucuronoside + H2O = D-glucuronate + an alcohol. Alpha-glucuronidase involved in the hydrolysis of xylan, a major structural heterogeneous polysaccharide found in plant biomass representing the second most abundant polysaccharide in the biosphere, after cellulose. Releases 4-O-methylglucuronic acid from xylan. The protein is Probable alpha-glucuronidase A (aguA) of Aspergillus terreus (strain NIH 2624 / FGSC A1156).